We begin with the raw amino-acid sequence, 436 residues long: 3-ketoacyl-CoA thiolase (436 aa).

Cys99 serves as the catalytic Acyl-thioester intermediate. Residues His392 and Cys422 each act as proton acceptor in the active site.

This sequence belongs to the thiolase-like superfamily. Thiolase family. In terms of assembly, heterotetramer of two alpha chains (FadJ) and two beta chains (FadI).

The protein resides in the cytoplasm. The catalysed reaction is an acyl-CoA + acetyl-CoA = a 3-oxoacyl-CoA + CoA. Its pathway is lipid metabolism; fatty acid beta-oxidation. Catalyzes the final step of fatty acid oxidation in which acetyl-CoA is released and the CoA ester of a fatty acid two carbons shorter is formed. This chain is 3-ketoacyl-CoA thiolase, found in Escherichia coli O8 (strain IAI1).